The chain runs to 614 residues: Laccase 1 (614 aa).

The signal sequence occupies residues 1-21; sequence MSRFARLLLMVVALFFTNAWA. Plastocyanin-like domains are found at residues 30–143 and 172–360; these read ITWK…IRPK and YLVV…MRIP. N-linked (GlcNAc...) asparagine glycosylation is present at Asn75. Positions 79, 81, 123, and 125 each coordinate Cu cation. 5 N-linked (GlcNAc...) asparagine glycosylation sites follow: Asn257, Asn280, Asn445, Asn469, and Asn485. A Plastocyanin-like 3 domain is found at 469–599; sequence NATRDTENDG…GGMGIAILDG (131 aa). Cu cation contacts are provided by His507, His510, and His512. Asn527 is a glycosylation site (N-linked (GlcNAc...) asparagine). His581, Cys582, His583, and His587 together coordinate Cu cation.

It belongs to the multicopper oxidase family. It depends on Cu cation as a cofactor.

The protein resides in the cell surface. The protein operates within pigment biosynthesis. Laccase; part of the Pks1 gene cluster that mediates the biosynthesis of an anthraquinone derivative pigment that contributes to conidial pigmentation that provides protection from UV radiation, heat and cold stress. The polyketide synthase Pks1 produces 1-acetyl-2,4,6,8-tetrahydroxy-9,10-anthraquinone though condensation of acetyl-CoA with malonyl-CoA. The dehydratase EthD and the laccase Mlac1 further convert the anthraquinone derivative into the final conidial pigment. The polypeptide is Laccase 1 (Metarhizium majus (strain ARSEF 297)).